The chain runs to 612 residues: Cytoplasmic dynein 1 intermediate chain 2 (612 aa).

Basic and acidic residues-rich tracts occupy residues 1–13 and 20–43; these read MSDK…ELER and QIRE…KKEA. Disordered regions lie at residues 1 to 117 and 129 to 188; these read MSDK…MAKI and TYTK…EEKQ. Residue serine 2 is modified to N-acetylserine. Serine 51 is modified (diphosphoserine). Residues serine 51 and serine 84 each carry the phosphoserine modification. The segment covering 82–91 has biased composition (low complexity); sequence PSSKSVSTPS. Threonine 89 bears the Phosphothreonine mark. A phosphoserine mark is found at serine 91, serine 95, and serine 98. Basic and acidic residues predominate over residues 164–188; that stretch reads EKTLKKDEESDSKAPPHELTEEEKQ. WD repeat units lie at residues 251–300, 304–344, 353–394, 403–443, 448–493, 496–536, and 542–581; these read SKHR…TTPE, HCQS…RTPV, AHTH…HPQD, SKAV…AGIS, GHQG…PLYS, DNSD…EVPT, and EGNP…AVPR.

It belongs to the dynein intermediate chain family. Homodimer. The cytoplasmic dynein 1 complex consists of two catalytic heavy chains (HCs) and a number of non-catalytic subunits presented by intermediate chains (ICs), light intermediate chains (LICs) and light chains (LCs); the composition seems to vary in respect to the IC, LIC and LC composition. The heavy chain homodimer serves as a scaffold for the probable homodimeric assembly of the respective non-catalytic subunits. The ICs and LICs bind directly to the HC dimer and the LCs assemble on the IC dimer. Interacts with DYNLT3. Interacts with DYNLT1. Interacts (dephosphorylated at Ser-84) with DCTN1. Interacts with BICD2. Interacts with SPEF2. Interacts with CFAP61. In terms of processing, the phosphorylation status of Ser-84 appears to be involved in dynactin-dependent target binding. Pyrophosphorylation by 5-diphosphoinositol pentakisphosphate (5-IP7) promotes interaction with DCTN1. Serine pyrophosphorylation is achieved by Mg(2+)-dependent, but enzyme independent transfer of a beta-phosphate from a inositol pyrophosphate to a pre-phosphorylated serine residue.

It localises to the cytoplasm. The protein resides in the cytoskeleton. In terms of biological role, acts as one of several non-catalytic accessory components of the cytoplasmic dynein 1 complex that are thought to be involved in linking dynein to cargos and to adapter proteins that regulate dynein function. Cytoplasmic dynein 1 acts as a motor for the intracellular retrograde motility of vesicles and organelles along microtubules. The intermediate chains mediate the binding of dynein to dynactin via its 150 kDa component (p150-glued) DCTN1. Involved in membrane-transport, such as Golgi apparatus, late endosomes and lysosomes. The sequence is that of Cytoplasmic dynein 1 intermediate chain 2 (DYNC1I2) from Bos taurus (Bovine).